Here is a 335-residue protein sequence, read N- to C-terminus: RNA 3'-terminal phosphate cyclase (335 aa).

Residues Gln-101 and 282–285 each bind ATP; that span reads HMGD. His-306 serves as the catalytic Tele-AMP-histidine intermediate.

The protein belongs to the RNA 3'-terminal cyclase family. Type 1 subfamily.

The protein resides in the cytoplasm. The enzyme catalyses a 3'-end 3'-phospho-ribonucleotide-RNA + ATP = a 3'-end 2',3'-cyclophospho-ribonucleotide-RNA + AMP + diphosphate. Its function is as follows. Catalyzes the conversion of 3'-phosphate to a 2',3'-cyclic phosphodiester at the end of RNA. The mechanism of action of the enzyme occurs in 3 steps: (A) adenylation of the enzyme by ATP; (B) transfer of adenylate to an RNA-N3'P to produce RNA-N3'PP5'A; (C) and attack of the adjacent 2'-hydroxyl on the 3'-phosphorus in the diester linkage to produce the cyclic end product. The biological role of this enzyme is unknown but it is likely to function in some aspects of cellular RNA processing. This is RNA 3'-terminal phosphate cyclase from Sulfolobus acidocaldarius (strain ATCC 33909 / DSM 639 / JCM 8929 / NBRC 15157 / NCIMB 11770).